A 348-amino-acid polypeptide reads, in one-letter code: Inositol 2-dehydrogenase/D-chiro-inositol 3-dehydrogenase (348 aa).

The protein belongs to the Gfo/Idh/MocA family. Homotetramer.

The catalysed reaction is myo-inositol + NAD(+) = scyllo-inosose + NADH + H(+). It catalyses the reaction 1D-chiro-inositol + NAD(+) = scyllo-inosine + NADH + H(+). It participates in polyol metabolism; myo-inositol degradation into acetyl-CoA; acetyl-CoA from myo-inositol: step 1/7. In terms of biological role, involved in the oxidation of myo-inositol (MI) and D-chiro-inositol (DCI) to 2-keto-myo-inositol (2KMI or 2-inosose) and 1-keto-D-chiro-inositol (1KDCI), respectively. This is Inositol 2-dehydrogenase/D-chiro-inositol 3-dehydrogenase from Halalkalibacterium halodurans (strain ATCC BAA-125 / DSM 18197 / FERM 7344 / JCM 9153 / C-125) (Bacillus halodurans).